A 463-amino-acid polypeptide reads, in one-letter code: Female germline-specific tumor suppressor gld-1 (463 aa).

The span at 1–10 (MPSCTTPTYG) shows a compositional bias: polar residues. The disordered stretch occupies residues 1–76 (MPSCTTPTYG…RAPPPARLTL (76 aa)). Low complexity predominate over residues 11-31 (VSTQLESQSSESPSRSSVMTP). Residues 135–205 (PTATEPIEVE…PEPAGDMISI (71 aa)) are qua1 domain; involved in homodimerization. The 53-residue stretch at 208-260 (KIYVPKNEYPDYNFVGRILGPRGMTAKQLEQDTGCKIMVRGKGSMRDKSKESA) folds into the KH domain. Positions 305-336 (APEGTDELKRKQLMELAIINGTYRPMKSPNPA) are qua2 domain; involved in RNA binding. The tract at residues 443 to 463 (NTNVSPSGASPSASSVNNTSF) is disordered. The segment covering 447–457 (SPSGASPSASS) has biased composition (low complexity).

In terms of assembly, homodimer. Post-translationally, phosphorylated by cdk-2 which may negatively regulate its expression in distal mitotic germline cells. In terms of processing, undergoes proteasomal degradation in proximal oocytes following mating. As to expression, expressed in proximal and distal oocytes in female worms but is eliminated from proximal oocytes following mating.

RNA-binding protein which recognizes the 5'-UACUCAU-3' RNA consensus sequence. Binds sequences in both the 5'coding and the 3'-UTR region of rme-2 mRNA. Binds sequences in the 3'-UTR region of cye-1 mRNA. Binds to cyb-2.1, cyb-2.2 and cyb-3 mRNA. Binds sequences in the 3'-UTR region of tra-2 mRNA. Binds to the 3' UTR of Notch receptor homolog glp-1, thereby repressing glp-1 translation in the embryo. Binding to the glp-1 3' UTR is inhibited by pos-1 binding to an overlapping binding site in the glp-1 3' UTR. Germ line-specific tumor suppressor essential for oogenesis. Controls the spatial pattern of translation of multiple oogenesis specific mRNAs (e.g. yolk receptor rme-2) by repression of translation during early meiotic prophase (leptotene to pachytene) and then derepression of translation during diplotene/ diakinesis, following its degradation. Also functions to promote the male sexual fate in the hermaphrodite germline but not the male germline. Represses translation of the vacuolar ATPase component vha-13 in the distal gonad. Functions redundantly with gld-2 to promote the initiation of meiotic development and/or inhibit stem cell proliferation. By regulating cye-1 expression, prevents entry into mitosis in meiotic germline cells. In Caenorhabditis elegans, this protein is Female germline-specific tumor suppressor gld-1 (gld-1).